We begin with the raw amino-acid sequence, 88 residues long: Small ribosomal subunit protein uS17 (88 aa).

This sequence belongs to the universal ribosomal protein uS17 family. Part of the 30S ribosomal subunit.

One of the primary rRNA binding proteins, it binds specifically to the 5'-end of 16S ribosomal RNA. The sequence is that of Small ribosomal subunit protein uS17 from Levilactobacillus brevis (strain ATCC 367 / BCRC 12310 / CIP 105137 / JCM 1170 / LMG 11437 / NCIMB 947 / NCTC 947) (Lactobacillus brevis).